The primary structure comprises 364 residues: D-alanine--D-alanine ligase (364 aa).

In terms of domain architecture, ATP-grasp spans 140–346 (KKLALLEGIP…YSQLIDKLIS (207 aa)). Position 173-228 (173-228 (ESEFSYPVFVKPANSGSSVGISKAKDREDLVLAIHEAFLYDTKILIEQAINAREIE)) interacts with ATP. Mg(2+) contacts are provided by aspartate 299, glutamate 313, and asparagine 315.

It belongs to the D-alanine--D-alanine ligase family. The cofactor is Mg(2+). Mn(2+) serves as cofactor.

It is found in the cytoplasm. The catalysed reaction is 2 D-alanine + ATP = D-alanyl-D-alanine + ADP + phosphate + H(+). Its pathway is cell wall biogenesis; peptidoglycan biosynthesis. In terms of biological role, cell wall formation. In Caldicellulosiruptor bescii (strain ATCC BAA-1888 / DSM 6725 / KCTC 15123 / Z-1320) (Anaerocellum thermophilum), this protein is D-alanine--D-alanine ligase.